The following is a 400-amino-acid chain: Lysophospholipid transporter LplT (400 aa).

The next 11 membrane-spanning stretches (helical) occupy residues 19–39 (VIVAQFLSAFGDNALLFATLA), 53–73 (VLQMVFVGAYILFAPFVGQIA), 91–111 (AGAAGICLGVNPFVGYTLVGI), 139–159 (LMEASTIAAILLGSVAGGVLA), 164–184 (IAALVACALAYAGAVAANLFI), 227–247 (LFWGAGVTLRFLLVLWVPVAL), 257–277 (YLNAMVAVGIVVGAGAAAKLV), 281–301 (TVSRCMPAGILIGVVVAIFSL), 304–324 (ALLPAYALLLLIGMLGGFFVV), 352–372 (NSAMLLMLGLYSLAVLVGVPA), and 373–393 (VAIGIGFGVLFALAIAALWIW).

This sequence belongs to the major facilitator superfamily. LplT (TC 2.A.1.42) family.

It is found in the cell inner membrane. Its function is as follows. Catalyzes the facilitated diffusion of 2-acyl-glycero-3-phosphoethanolamine (2-acyl-GPE) into the cell. The sequence is that of Lysophospholipid transporter LplT from Salmonella gallinarum (strain 287/91 / NCTC 13346).